A 906-amino-acid polypeptide reads, in one-letter code: Coatomer subunit beta' (906 aa).

6 WD repeats span residues 13–52, 55–94, 97–136, 140–180, 183–224, and 227–266; these read ARSD…LVKT, VCDL…RVHM, AHSD…SCSQ, GHTH…PNFT, GHEK…CVQT, and GHAQ…LEST. At lysine 627 the chain carries N6-acetyllysine. Residues 837–870 are disordered; that stretch reads EEGKDFQPSRSTAQQELDGKPASPTPVIVASHTA. Residue serine 859 is modified to Phosphoserine. Threonine 861 is subject to Phosphothreonine. The stretch at 866–891 forms a coiled coil; that stretch reads ASHTANKEEKSLLELEVDLDNLELED.

The protein belongs to the WD repeat COPB2 family. As to quaternary structure, oligomeric complex that consists of at least the alpha, beta, beta', gamma, delta, epsilon and zeta subunits. Probably interacts with PEX11A. Interacts with SCYL1. Interacts with JAGN1.

It localises to the cytoplasm. It is found in the cytosol. Its subcellular location is the golgi apparatus membrane. The protein localises to the cytoplasmic vesicle. The protein resides in the COPI-coated vesicle membrane. Functionally, the coatomer is a cytosolic protein complex that binds to dilysine motifs and reversibly associates with Golgi non-clathrin-coated vesicles, which further mediate biosynthetic protein transport from the ER, via the Golgi up to the trans Golgi network. Coatomer complex is required for budding from Golgi membranes, and is essential for the retrograde Golgi-to-ER transport of dilysine-tagged proteins. In mammals, the coatomer can only be recruited by membranes associated to ADP-ribosylation factors (ARFs), which are small GTP-binding proteins; the complex also influences the Golgi structural integrity, as well as the processing, activity, and endocytic recycling of LDL receptors. Its function is as follows. This coatomer complex protein, essential for Golgi budding and vesicular trafficking, is a selective binding protein (RACK) for protein kinase C, epsilon type. It binds to Golgi membranes in a GTP-dependent manner. This Homo sapiens (Human) protein is Coatomer subunit beta' (COPB2).